A 149-amino-acid polypeptide reads, in one-letter code: Cell division protein SepF (149 aa).

The protein belongs to the SepF family. As to quaternary structure, homodimer. Interacts with FtsZ.

The protein resides in the cytoplasm. Cell division protein that is part of the divisome complex and is recruited early to the Z-ring. Probably stimulates Z-ring formation, perhaps through the cross-linking of FtsZ protofilaments. Its function overlaps with FtsA. The protein is Cell division protein SepF of Pelotomaculum thermopropionicum (strain DSM 13744 / JCM 10971 / SI).